The primary structure comprises 104 residues: Large ribosomal subunit protein bL21 (104 aa).

The protein belongs to the bacterial ribosomal protein bL21 family. In terms of assembly, part of the 50S ribosomal subunit. Contacts protein L20.

This protein binds to 23S rRNA in the presence of protein L20. The protein is Large ribosomal subunit protein bL21 of Clostridium botulinum (strain Kyoto / Type A2).